The chain runs to 507 residues: Cobyric acid synthase (507 aa).

Residues 249 to 451 (DIEIAVINLP…IHGIFENREF (203 aa)) form the GATase cobBQ-type domain. C330 functions as the Nucleophile in the catalytic mechanism. H443 is an active-site residue.

The protein belongs to the CobB/CobQ family. CobQ subfamily.

Its pathway is cofactor biosynthesis; adenosylcobalamin biosynthesis. Its function is as follows. Catalyzes amidations at positions B, D, E, and G on adenosylcobyrinic A,C-diamide. NH(2) groups are provided by glutamine, and one molecule of ATP is hydrogenolyzed for each amidation. The protein is Cobyric acid synthase of Thermoanaerobacter sp. (strain X514).